Here is a 241-residue protein sequence, read N- to C-terminus: MAFSPNPLSLSVPDPAFESWLRDSGYLELLDHRTSAAAAAASSSASVSSSAAATSAASDDVVSSITGGFFASLLSRLVTVSSLLTINPFSKLSADDFSGDTTPWTTGFIGNCDSYSFPSSSQQARMRVHENIKRFARNYATLFIVFFACALYQMPLALVGLLGSLALWELFKYCSDKWKFDRHPSMRKLSIGIGQCATAVLLTFLNVQMALFSALAISYSVMILHAGFRKLTPSKKPTRGR.

Helical transmembrane passes span 142–162 (LFIVFFACALYQMPLALVGLL), 189–205 (LSIGIGQCATAVLLTFL), and 209–228 (MALFSALAISYSVMILHAGF).

This sequence belongs to the PRA1 family.

It localises to the endoplasmic reticulum membrane. In terms of biological role, may be involved in both secretory and endocytic intracellular trafficking in the endosomal/prevacuolar compartments. This Arabidopsis thaliana (Mouse-ear cress) protein is PRA1 family protein H (PRA1H).